The sequence spans 420 residues: Glutaryl-CoA dehydrogenase, mitochondrial (420 aa).

Arg-125–Ser-126 contributes to the substrate binding site. FAD-binding positions include Phe-164–Thr-167, Ser-173, and Trp-198–Thr-200. Ser-173 is a binding site for substrate. Residues Phe-273 to Asn-277 and Arg-280 each bind substrate. Residue Glu-400 is the Proton acceptor of the active site. Residues Thr-402 and Phe-420 each contribute to the FAD site.

It belongs to the acyl-CoA dehydrogenase family. It depends on FAD as a cofactor.

The protein resides in the mitochondrion matrix. It catalyses the reaction glutaryl-CoA + oxidized [electron-transfer flavoprotein] + 2 H(+) = (2E)-butenoyl-CoA + reduced [electron-transfer flavoprotein] + CO2. Its pathway is amino-acid metabolism; lysine degradation. The protein operates within amino-acid metabolism; tryptophan metabolism. The polypeptide is Glutaryl-CoA dehydrogenase, mitochondrial (gcdh) (Dictyostelium discoideum (Social amoeba)).